Consider the following 530-residue polypeptide: UPF0422 protein lpl2888 (530 aa).

The first 19 residues, Met1 to Ala19, serve as a signal peptide directing secretion. The stretch at Asp20–Thr66 forms a coiled coil. Residues Leu50–Ala81 form a disordered region.

The protein belongs to the UPF0422 family.

The chain is UPF0422 protein lpl2888 from Legionella pneumophila (strain Lens).